The chain runs to 295 residues: Acetylglutamate kinase (295 aa).

Residues 61–62 (GG), R83, and N182 each bind substrate.

This sequence belongs to the acetylglutamate kinase family. ArgB subfamily.

It is found in the cytoplasm. The enzyme catalyses N-acetyl-L-glutamate + ATP = N-acetyl-L-glutamyl 5-phosphate + ADP. The protein operates within amino-acid biosynthesis; L-arginine biosynthesis; N(2)-acetyl-L-ornithine from L-glutamate: step 2/4. Its function is as follows. Catalyzes the ATP-dependent phosphorylation of N-acetyl-L-glutamate. In Clostridium acetobutylicum (strain ATCC 824 / DSM 792 / JCM 1419 / IAM 19013 / LMG 5710 / NBRC 13948 / NRRL B-527 / VKM B-1787 / 2291 / W), this protein is Acetylglutamate kinase.